A 275-amino-acid polypeptide reads, in one-letter code: Ribosomal RNA small subunit methyltransferase A (275 aa).

S-adenosyl-L-methionine contacts are provided by Asn21, Leu23, Gly48, Glu69, Asp94, and Asn115.

The protein belongs to the class I-like SAM-binding methyltransferase superfamily. rRNA adenine N(6)-methyltransferase family. RsmA subfamily.

The protein resides in the cytoplasm. It carries out the reaction adenosine(1518)/adenosine(1519) in 16S rRNA + 4 S-adenosyl-L-methionine = N(6)-dimethyladenosine(1518)/N(6)-dimethyladenosine(1519) in 16S rRNA + 4 S-adenosyl-L-homocysteine + 4 H(+). Its function is as follows. Specifically dimethylates two adjacent adenosines (A1518 and A1519) in the loop of a conserved hairpin near the 3'-end of 16S rRNA in the 30S particle. May play a critical role in biogenesis of 30S subunits. The protein is Ribosomal RNA small subunit methyltransferase A of Clostridium botulinum (strain Okra / Type B1).